Reading from the N-terminus, the 523-residue chain is UDP-glucuronosyltransferase 3A2 (523 aa).

The N-terminal stretch at 1–22 (MAGQRVLLLVGFLLPGVLLSEA) is a signal peptide. Residues 23 to 483 (AKILTISTVG…YVFQQPWHEQ (461 aa)) lie on the Extracellular side of the membrane. A glycan (N-linked (GlcNAc...) asparagine) is linked at Asn-52. A helical membrane pass occupies residues 484–504 (YLLDVFVFLLGLTLGTLWLCG). The Cytoplasmic segment spans residues 505 to 523 (KLLGMAVWWLRGARKVKET).

The protein belongs to the UDP-glycosyltransferase family.

The protein resides in the membrane. The catalysed reaction is glucuronate acceptor + UDP-alpha-D-glucuronate = acceptor beta-D-glucuronoside + UDP + H(+). Its function is as follows. UDP-glucuronosyltransferases catalyze phase II biotransformation reactions in which lipophilic substrates are conjugated with glucuronic acid to increase water solubility and enhance excretion. They are of major importance in the conjugation and subsequent elimination of potentially toxic xenobiotics and endogenous compounds. The chain is UDP-glucuronosyltransferase 3A2 (UGT3A2) from Homo sapiens (Human).